The primary structure comprises 226 residues: MEAERRHRALYKGTTPPWKETYRKRCVERLKRNRSKLLDKFRQVGERIHGGVGGSFLVQEVMEEEWKAMQSENGSFPSMWKKEAFSQALNIMRDPDELATLEEIKQELLLEEKAMIEEFENILQFEEQCLDSVVELSTGDQIVCPVCNRNYLTVTSCFIVCQCGVYINTQSQGMSIEKLHSLLESSLTSHGYHCTKLPVFSVATELGGAASLFMSCQECDAMVVIL.

An interaction with importin beta region spans residues Met-1–Gly-45. The tract at residues His-49–Ser-171 is interaction with RPA1. The RIP-type zinc-finger motif lies at Cys-144 to Cys-219.

As to quaternary structure, interacts directly with the rpa1 subunit of RPA complex. Interacts with importin beta, but not with importin alpha. Forms a complex with the RPA complex and importin beta, which is dissociated by Ran-GTP.

It is found in the nucleus. In terms of biological role, mediates the import of RPA complex into the nucleus, via its interaction with importin beta. In Xenopus laevis (African clawed frog), this protein is RPA-interacting protein A (rpain-a).